We begin with the raw amino-acid sequence, 213 residues long: Motile sperm domain-containing protein 1 (213 aa).

The MSP domain occupies 16–143 (PVFVFPTELI…KEHLTESLFF (128 aa)). A run of 2 helical transmembrane segments spans residues 159–179 (SLLTVFLGVVCIAALMLPTLG) and 191–211 (LSVNQKLVAAYILGLITMAIL). The Nuclear export signal signature appears at 205 to 208 (LITM).

It is found in the endoplasmic reticulum membrane. The protein resides in the golgi apparatus membrane. Its function is as follows. Plays a role in differentiation and/or proliferation of mesenchymal stem cells. Proposed to be involved in epithelial-to-mesenchymal transition (EMT). However, another study suggests that it is not required for EMT or stem cell self-renewal and acts during later stages of differentiation. In Pongo abelii (Sumatran orangutan), this protein is Motile sperm domain-containing protein 1 (MOSPD1).